The sequence spans 429 residues: UDP-N-acetylglucosamine 1-carboxyvinyltransferase (429 aa).

Phosphoenolpyruvate is bound at residue 22 to 23 (KN). Residue Arg102 coordinates UDP-N-acetyl-alpha-D-glucosamine. Cys126 (proton donor) is an active-site residue. A 2-(S-cysteinyl)pyruvic acid O-phosphothioketal modification is found at Cys126. UDP-N-acetyl-alpha-D-glucosamine is bound by residues 131 to 135 (RPVDL), Asp316, and Ile338.

This sequence belongs to the EPSP synthase family. MurA subfamily.

The protein resides in the cytoplasm. The catalysed reaction is phosphoenolpyruvate + UDP-N-acetyl-alpha-D-glucosamine = UDP-N-acetyl-3-O-(1-carboxyvinyl)-alpha-D-glucosamine + phosphate. It functions in the pathway cell wall biogenesis; peptidoglycan biosynthesis. Functionally, cell wall formation. Adds enolpyruvyl to UDP-N-acetylglucosamine. This Rhodopseudomonas palustris (strain BisB5) protein is UDP-N-acetylglucosamine 1-carboxyvinyltransferase.